The primary structure comprises 122 residues: Basic phospholipase A2 PL-X (122 aa).

Intrachain disulfides connect C26–C115, C28–C44, C43–C95, C49–C122, C50–C88, C57–C81, and C75–C86. Ca(2+) is bound by residues Y27, G29, and G31. The active site involves H47. D48 contacts Ca(2+). The active site involves D89.

Belongs to the phospholipase A2 family. Group II subfamily. D49 sub-subfamily. Ca(2+) serves as cofactor. As to expression, expressed by the venom gland.

The protein localises to the secreted. It catalyses the reaction a 1,2-diacyl-sn-glycero-3-phosphocholine + H2O = a 1-acyl-sn-glycero-3-phosphocholine + a fatty acid + H(+). In terms of biological role, PLA2 catalyzes the calcium-dependent hydrolysis of the 2-acyl groups in 3-sn-phosphoglycerides. The protein is Basic phospholipase A2 PL-X of Protobothrops flavoviridis (Habu).